Here is a 369-residue protein sequence, read N- to C-terminus: Velvet complex subunit B (369 aa).

Disordered stretches follow at residues 1–54, 138–174, and 346–369; these read MYAV…STVH, SIST…VGQP, and KDGV…DNEY. Positions 13–27 are enriched in pro residues; the sequence is HPPPLSMDRIPPPST. The 293-residue stretch at 53–345 folds into the Velvet domain; sequence VHDGRIWSLQ…ANQGIKIPIR (293 aa).

The protein belongs to the velvet family. VelB subfamily. As to quaternary structure, component of the heterotrimeric velvet complex composed of laeA, veA and velB; VeA acting as a bridging protein between laeA and velB. Interacts directly with veA. Forms a heterodimeric complex with vosA; the formation of the velB-vosA complex is light-dependent.

Its subcellular location is the nucleus. It is found in the cytoplasm. Component of the velvet transcription factor complex that controls sexual/asexual developmental ratio in response to light, promoting sexual development in the darkness while stimulating asexual sporulation under illumination. The velvet complex acts as a global regulator for secondary metabolite gene expression. Component of the velB-VosA heterodimeric complex that plays a dual role in activating genes associated with spore maturation and repressing certain development-associated genes. The velB-VosA complex binds DNA through the DNA-binding domain of vosA that recognizes an 11-nucleotide consensus sequence 5'-CTGGCCGCGGC-3' consisting of two motifs in the promoters of key developmental regulatory genes. The vosA-velB complex binds to the beta-glucan synthase fksA gene promoter in asexual spores for repression. The chain is Velvet complex subunit B from Emericella nidulans (strain FGSC A4 / ATCC 38163 / CBS 112.46 / NRRL 194 / M139) (Aspergillus nidulans).